The primary structure comprises 385 residues: Putative 8-amino-7-oxononanoate synthase (385 aa).

Residue Arg21 participates in substrate binding. 108–109 (GY) lines the pyridoxal 5'-phosphate pocket. His133 lines the substrate pocket. Pyridoxal 5'-phosphate is bound by residues Ser182, 207–210 (DEAH), and 234–237 (TFGK). Position 237 is an N6-(pyridoxal phosphate)lysine (Lys237). Ser351 lines the substrate pocket.

Belongs to the class-II pyridoxal-phosphate-dependent aminotransferase family. BioF subfamily. As to quaternary structure, homodimer. Pyridoxal 5'-phosphate serves as cofactor.

It carries out the reaction 6-carboxyhexanoyl-[ACP] + L-alanine + H(+) = (8S)-8-amino-7-oxononanoate + holo-[ACP] + CO2. Its pathway is cofactor biosynthesis; biotin biosynthesis. Its function is as follows. Catalyzes the decarboxylative condensation of pimeloyl-[acyl-carrier protein] and L-alanine to produce 8-amino-7-oxononanoate (AON), [acyl-carrier protein], and carbon dioxide. This chain is Putative 8-amino-7-oxononanoate synthase (bioF), found in Desulfosudis oleivorans (strain DSM 6200 / JCM 39069 / Hxd3) (Desulfococcus oleovorans).